Reading from the N-terminus, the 476-residue chain is Membrane-bound lytic murein transglycosylase F (476 aa).

An N-terminal signal peptide occupies residues 1 to 22 (MTRFLFALILGFLLTACQQVTV). A non-LT domain region spans residues 23 to 257 (DETEFVPKKL…HLNEKYFGHV (235 aa)). The tract at residues 258-476 (KRFDYVDTRA…AGTLSPEQPK (219 aa)) is LT domain. Residue Glu302 is part of the active site. A disordered region spans residues 446–476 (SKQQNPEEEPSDLASEEPAIPAGTLSPEQPK). Residues 451 to 460 (PEEEPSDLAS) show a composition bias toward acidic residues.

In the N-terminal section; belongs to the bacterial solute-binding protein 3 family. It in the C-terminal section; belongs to the transglycosylase Slt family.

Its subcellular location is the cell outer membrane. The enzyme catalyses Exolytic cleavage of the (1-&gt;4)-beta-glycosidic linkage between N-acetylmuramic acid (MurNAc) and N-acetylglucosamine (GlcNAc) residues in peptidoglycan, from either the reducing or the non-reducing ends of the peptidoglycan chains, with concomitant formation of a 1,6-anhydrobond in the MurNAc residue.. Its function is as follows. Murein-degrading enzyme that degrades murein glycan strands and insoluble, high-molecular weight murein sacculi, with the concomitant formation of a 1,6-anhydromuramoyl product. Lytic transglycosylases (LTs) play an integral role in the metabolism of the peptidoglycan (PG) sacculus. Their lytic action creates space within the PG sacculus to allow for its expansion as well as for the insertion of various structures such as secretion systems and flagella. The protein is Membrane-bound lytic murein transglycosylase F of Shewanella baltica (strain OS155 / ATCC BAA-1091).